We begin with the raw amino-acid sequence, 198 residues long: Glycerol-3-phosphate acyltransferase (198 aa).

Transmembrane regions (helical) follow at residues Thr4 to Gly24, Leu71 to Gly91, Leu113 to Phe133, and Val147 to Leu167.

The protein belongs to the PlsY family. In terms of assembly, probably interacts with PlsX.

Its subcellular location is the cell membrane. The enzyme catalyses an acyl phosphate + sn-glycerol 3-phosphate = a 1-acyl-sn-glycero-3-phosphate + phosphate. Its pathway is lipid metabolism; phospholipid metabolism. Catalyzes the transfer of an acyl group from acyl-phosphate (acyl-PO(4)) to glycerol-3-phosphate (G3P) to form lysophosphatidic acid (LPA). This enzyme utilizes acyl-phosphate as fatty acyl donor, but not acyl-CoA or acyl-ACP. This chain is Glycerol-3-phosphate acyltransferase, found in Bacillus cereus (strain G9842).